The chain runs to 412 residues: Alpha-1-antiproteinase (412 aa).

An N-terminal signal peptide occupies residues 1–24; sequence MPSSISWGLLLLAGLCCLAPGSLA. A Phosphoserine modification is found at serine 33. 4 N-linked (GlcNAc...) asparagine glycosylation sites follow: asparagine 65, asparagine 102, asparagine 165, and asparagine 266. The segment at 368–387 is RCL; it reads GVTVLEAIPMSLPPDVRFDR. At serine 378 the chain carries Phosphoserine.

The protein belongs to the serpin family. Interacts with CELA2A. Interacts with ERGIC3 and LMAN1/ERGIC53. Interacts with PRSS1/Trypsin. Plasma.

The protein resides in the secreted. In terms of biological role, inhibitor of serine proteases. The polypeptide is Alpha-1-antiproteinase (Callosciurus caniceps (Gray-bellied squirrel)).